The sequence spans 410 residues: Cytochrome P450 CYP107DY1 (410 aa).

2 residues coordinate heme: His106 and Arg110. 2 residues coordinate substrate: Thr249 and Glu253. Positions 302, 358, and 360 each coordinate heme.

The protein belongs to the cytochrome P450 family. Heme is required as a cofactor.

It carries out the reaction mevastatin + 2 reduced [2Fe-2S]-[ferredoxin] + O2 + 2 H(+) = pravastatin lactone + 2 oxidized [2Fe-2S]-[ferredoxin] + H2O. Cytochrome P450 whose physiological substrate is unknown. In vitro, is able to catalyze the selective hydroxylation of mevastatin to pravastatin, the widely used therapeutic agent for hypercholesterolemia. The sequence is that of Cytochrome P450 CYP107DY1 from Priestia megaterium (strain ATCC 12872 / QMB1551) (Bacillus megaterium).